We begin with the raw amino-acid sequence, 138 residues long: ATP synthase epsilon chain (138 aa).

The protein belongs to the ATPase epsilon chain family. In terms of assembly, F-type ATPases have 2 components, CF(1) - the catalytic core - and CF(0) - the membrane proton channel. CF(1) has five subunits: alpha(3), beta(3), gamma(1), delta(1), epsilon(1). CF(0) has three main subunits: a, b and c.

The protein resides in the cell inner membrane. Functionally, produces ATP from ADP in the presence of a proton gradient across the membrane. This is ATP synthase epsilon chain from Cupriavidus necator (strain ATCC 17699 / DSM 428 / KCTC 22496 / NCIMB 10442 / H16 / Stanier 337) (Ralstonia eutropha).